The following is a 278-amino-acid chain: Elongation factor Ts (278 aa).

Residues 80–83 (TDFV) are involved in Mg(2+) ion dislocation from EF-Tu.

This sequence belongs to the EF-Ts family.

It is found in the cytoplasm. In terms of biological role, associates with the EF-Tu.GDP complex and induces the exchange of GDP to GTP. It remains bound to the aminoacyl-tRNA.EF-Tu.GTP complex up to the GTP hydrolysis stage on the ribosome. This chain is Elongation factor Ts, found in Renibacterium salmoninarum (strain ATCC 33209 / DSM 20767 / JCM 11484 / NBRC 15589 / NCIMB 2235).